Reading from the N-terminus, the 314-residue chain is 2,3-dihydroxyphenylpropionate/2,3-dihydroxicinnamic acid 1,2-dioxygenase (314 aa).

The active-site Proton donor is histidine 115. Histidine 179 functions as the Proton acceptor in the catalytic mechanism.

It belongs to the LigB/MhpB extradiol dioxygenase family. Homotetramer. Fe(2+) is required as a cofactor.

The catalysed reaction is 3-(2,3-dihydroxyphenyl)propanoate + O2 = (2Z,4E)-2-hydroxy-6-oxonona-2,4-dienedioate + H(+). The enzyme catalyses (2E)-3-(2,3-dihydroxyphenyl)prop-2-enoate + O2 = (2Z,4E,7E)-2-hydroxy-6-oxonona-2,4,7-trienedioate + H(+). Its pathway is aromatic compound metabolism; 3-phenylpropanoate degradation. Its function is as follows. Catalyzes the non-heme iron(II)-dependent oxidative cleavage of 2,3-dihydroxyphenylpropionic acid and 2,3-dihydroxicinnamic acid into 2-hydroxy-6-ketononadienedioate and 2-hydroxy-6-ketononatrienedioate, respectively. The chain is 2,3-dihydroxyphenylpropionate/2,3-dihydroxicinnamic acid 1,2-dioxygenase from Klebsiella pneumoniae (strain 342).